We begin with the raw amino-acid sequence, 306 residues long: Pantothenate kinase (306 aa).

Residue 91–98 coordinates ATP; it reads GSVAVGKS.

Belongs to the prokaryotic pantothenate kinase family.

The protein localises to the cytoplasm. The enzyme catalyses (R)-pantothenate + ATP = (R)-4'-phosphopantothenate + ADP + H(+). It functions in the pathway cofactor biosynthesis; coenzyme A biosynthesis; CoA from (R)-pantothenate: step 1/5. The sequence is that of Pantothenate kinase from Streptococcus pneumoniae serotype 19F (strain G54).